A 555-amino-acid chain; its full sequence is Disabled homolog 1 (555 aa).

The disordered stretch occupies residues 1–26 (MSTETELQVAVKTSAKKDSRKKGQDR). A compositionally biased stretch (basic and acidic residues) spans 15-26 (AKKDSRKKGQDR). In terms of domain architecture, PID spans 36–189 (KGEGVRYKAK…CEQAVYQTIL (154 aa)). 3 positions are modified to phosphotyrosine: Tyr-198, Tyr-220, and Tyr-232. Disordered regions lie at residues 384–410 (LTPLATVPGTSDSTRPSPQTDKPRQKM), 418–437 (FQMAQPPPVPSRKPDQPSLT), and 468–555 (NLTP…QAGS). A compositionally biased stretch (polar residues) spans 391 to 403 (PGTSDSTRPSPQT). Composition is skewed to low complexity over residues 470–479 (TPVTSTTPST) and 487–501 (PRQSSPSKSSASHAS). Residue Ser-491 is modified to Phosphoserine; by CDK5. Acidic residues predominate over residues 504 to 513 (TTDDIFEEGF).

As to quaternary structure, associates with the SH2 domains of SRC, FYN and ABL. Interacts (phosphorylated on tyrosine residues) with CRK and CRKL (via respective SH2 domain). Interacts with DAB2IP, SIAH1, LRP8 and VLDLR. Interacts with LRP1. Interacts with APLP1 (via NPXY motif). Interacts with DAB2IP. Interacts with ZSWIM8. Phosphorylated by FYN on Tyr-198 and Tyr-220 upon reelin induction in embryonic neurons. Also phosphorylated on Ser-491 independently of reelin signaling. Post-translationally, ubiquitinated by various cullin-5-RING E3 ubiquitin-protein ligase complexes (ECS complexes) following ligand-binding and phosphorylation, leading to its degradation. Ubiquitinated by the ECS(SOCS7) complex in the cortical plate of the developing cerebral cortex following ligand-binding and phosphorylation by FYN, leading to its degradation by the proteasome. Recognized by ZSWIM8 through a disorder targets misorder mechanism that eliminates misfolded DAB1 via ubiquitination and proteasomal degradation.

Its subcellular location is the cytoplasm. In terms of biological role, signaling adapter of the reelin-mediated signaling pathway, which regulates the migration and differentiation of postmitotic neurons during brain development. Mediates intracellular transduction of Reelin signaling following reelin (RELN)-binding to its receptor: acts by docking proteins through its phosphotyrosine residues and PID domain. The protein is Disabled homolog 1 (DAB1) of Macaca fascicularis (Crab-eating macaque).